Here is a 516-residue protein sequence, read N- to C-terminus: Beta-glucosidase 1 (516 aa).

Positions 1–21 (MGHRLVVVLLLALLVAGAARA) are cleaved as a signal peptide. Q68 provides a ligand contact to a beta-D-glucoside. N96 carries an N-linked (GlcNAc...) asparagine glycan. A beta-D-glucoside is bound by residues H169 and 214–215 (NE). The Proton donor role is filled by E215. Cysteines 234 and 237 form a disulfide. N290 carries an N-linked (GlcNAc...) asparagine glycan. Y353 contacts a beta-D-glucoside. N364 carries N-linked (GlcNAc...) asparagine glycosylation. E424 is a binding site for a beta-D-glucoside. The active-site Nucleophile is the E424. Residue N432 is glycosylated (N-linked (GlcNAc...) asparagine). Residues W471, 478-479 (EW), and F487 contribute to the a beta-D-glucoside site.

It belongs to the glycosyl hydrolase 1 family.

The enzyme catalyses Hydrolysis of terminal, non-reducing beta-D-glucosyl residues with release of beta-D-glucose.. The chain is Beta-glucosidase 1 (BGLU1) from Oryza sativa subsp. japonica (Rice).